Here is a 356-residue protein sequence, read N- to C-terminus: MAGVACLGKAADADEWCDSGLGSLGPDAAAPGGPGLGAELGPGLSWAPLVFGYVTEDGDTALHLAVIHQHEPFLDFLLGFSAGTEYMDLQNDLGQTALHLAAILGETSTVEKLYAAGAGLCVAERRGHTALHLACRVGAHACARALLQPRPRRPREAPDTYLAQGPDRTPDTNHTPVALYPDSDLEKEEEESEEDWKLQLEAENYEGHTPLHVAVIHKDVEMVRLLRDAGADLDKPEPTCGRSPLHLAVEAQAADVLELLLRAGANPAARMYGGRTPLGSAMLRPNPILARLLRAHGAPEPEGEDEKSGPCSSSSDSDSGDEGDEYDDIVVHSSRSQTRLPPTPASKPLPDDPRPV.

Ser-19 and Ser-23 each carry phosphoserine; by RPS6KA1. 3 ANK repeats span residues 57 to 86, 93 to 122, and 126 to 155; these read DGDTALHLAVIHQHEPFLDFLLGFSAGTEY, LGQTALHLAAILGETSTVEKLYAAGAGLCV, and RGHTALHLACRVGAHACARALLQPRPRRPR. Residues 149 to 193 are disordered; that stretch reads PRPRRPREAPDTYLAQGPDRTPDTNHTPVALYPDSDLEKEEEESE. At Ser-183 the chain carries Phosphoserine. The span at 183-193 shows a compositional bias: acidic residues; the sequence is SDLEKEEEESE. 3 ANK repeats span residues 206–235, 240–269, and 273–302; these read EGHTPLHVAVIHKDVEMVRLLRDAGADLDK, CGRSPLHLAVEAQAADVLELLLRAGANPAA, and GGRTPLGSAMLRPNPILARLLRAHGAPEPE. The disordered stretch occupies residues 298 to 356; it reads APEPEGEDEKSGPCSSSSDSDSGDEGDEYDDIVVHSSRSQTRLPPTPASKPLPDDPRPV. Ser-313 and Ser-315 each carry phosphoserine; by CK2. A compositionally biased stretch (acidic residues) spans 318 to 328; it reads DSGDEGDEYDD.

It belongs to the NF-kappa-B inhibitor family. Interacts with THRB (via ligand-binding domain). Interacts with RELA and REL. Interacts with COMMD1. Interacts with inhibitor kappa B-interacting Ras-like NKIRAS1 and NKIRAS2. Post-translationally, phosphorylated by RPS6KA1; followed by degradation. Interaction with NKIRAS1 and NKIRAS2 probably prevents phosphorylation. In terms of tissue distribution, expressed in all tissues examined.

It localises to the cytoplasm. The protein resides in the nucleus. Its function is as follows. Inhibits NF-kappa-B by complexing with and trapping it in the cytoplasm. However, the unphosphorylated form resynthesized after cell stimulation is able to bind NF-kappa-B allowing its transport to the nucleus and protecting it to further NFKBIA-dependent inactivation. Association with inhibitor kappa B-interacting NKIRAS1 and NKIRAS2 prevent its phosphorylation rendering it more resistant to degradation, explaining its slower degradation. The sequence is that of NF-kappa-B inhibitor beta (NFKBIB) from Homo sapiens (Human).